Here is a 223-residue protein sequence, read N- to C-terminus: Sigma non-opioid intracellular receptor 1 (223 aa).

At M1–R7 the chain is on the lumenal side. A helical transmembrane segment spans residues A8–L29. The Cytoplasmic portion of the chain corresponds to S30–S223. The important for ligand-binding stretch occupies residues S98–L105. The C-terminal hydrophobic region stretch occupies residues F176–S223.

It belongs to the ERG2 family. In terms of assembly, homotrimer.

The protein resides in the nucleus inner membrane. It is found in the nucleus outer membrane. Its subcellular location is the nucleus envelope. It localises to the cytoplasmic vesicle. The protein localises to the endoplasmic reticulum membrane. The protein resides in the membrane. Functionally, may function in lipid transport from the endoplasmic reticulum and be involved in a wide array of cellular functions probably through regulation of the biogenesis of lipid microdomains at the plasma membrane. May regulate calcium efflux at the endoplasmic reticulum. The protein is Sigma non-opioid intracellular receptor 1 (SIGMAR1) of Taricha granulosa (Roughskin newt).